The sequence spans 37 residues: MKVRASVKRVCRNCKIVKRRGTVRVICTEARHKQRQG.

This sequence belongs to the bacterial ribosomal protein bL36 family.

The protein is Large ribosomal subunit protein bL36 of Halorhodospira halophila (strain DSM 244 / SL1) (Ectothiorhodospira halophila (strain DSM 244 / SL1)).